Consider the following 312-residue polypeptide: Methionyl-tRNA formyltransferase (312 aa).

109-112 (SLLP) serves as a coordination point for (6S)-5,6,7,8-tetrahydrofolate.

Belongs to the Fmt family.

It catalyses the reaction L-methionyl-tRNA(fMet) + (6R)-10-formyltetrahydrofolate = N-formyl-L-methionyl-tRNA(fMet) + (6S)-5,6,7,8-tetrahydrofolate + H(+). In terms of biological role, attaches a formyl group to the free amino group of methionyl-tRNA(fMet). The formyl group appears to play a dual role in the initiator identity of N-formylmethionyl-tRNA by promoting its recognition by IF2 and preventing the misappropriation of this tRNA by the elongation apparatus. The polypeptide is Methionyl-tRNA formyltransferase (Listeria welshimeri serovar 6b (strain ATCC 35897 / DSM 20650 / CCUG 15529 / CIP 8149 / NCTC 11857 / SLCC 5334 / V8)).